The primary structure comprises 142 residues: Lipoprotein MlpI (142 aa).

The N-terminal stretch at 1 to 17 (MKIINILFCLFLLMLNS) is a signal peptide. Cys-18 carries N-palmitoyl cysteine lipidation. Cys-18 carries the S-diacylglycerol cysteine lipid modification. Residues 22–54 (DTNTSQTKSRQKRDLTQKEATQEKPKSKEDLLR) are disordered. Positions 33-54 (KRDLTQKEATQEKPKSKEDLLR) are enriched in basic and acidic residues.

The protein belongs to the Multicopy lipoprotein (Mlp) family.

The protein localises to the cell outer membrane. An outer membrane protein that may participate in pathogenesis. Some human Lyme disease patients have antibodies against this protein. The Mlp proteins probably undergo intragenic recombination, generating new alleles. This chain is Lipoprotein MlpI, found in Borreliella burgdorferi (strain ATCC 35210 / DSM 4680 / CIP 102532 / B31) (Borrelia burgdorferi).